Here is a 314-residue protein sequence, read N- to C-terminus: Putative S-adenosyl-L-methionine-dependent methyltransferase MAV_4441 (314 aa).

S-adenosyl-L-methionine contacts are provided by residues Asp-138 and 167 to 168 (DL).

It belongs to the UPF0677 family.

Its function is as follows. Exhibits S-adenosyl-L-methionine-dependent methyltransferase activity. This chain is Putative S-adenosyl-L-methionine-dependent methyltransferase MAV_4441, found in Mycobacterium avium (strain 104).